A 100-amino-acid chain; its full sequence is MAKKSMIEREKKRSRLIAKYADKRAELKEQLRQAEDLDDKIEIQRQLQRLPRNSAPSRHRNRCWVTGRPRGYYRDFGLSRNVLREWAHQGLLPGVVKSSW.

This sequence belongs to the universal ribosomal protein uS14 family. As to quaternary structure, part of the 30S ribosomal subunit. Contacts proteins S3 and S10.

Binds 16S rRNA, required for the assembly of 30S particles and may also be responsible for determining the conformation of the 16S rRNA at the A site. This is Small ribosomal subunit protein uS14 from Gloeothece citriformis (strain PCC 7424) (Cyanothece sp. (strain PCC 7424)).